The chain runs to 292 residues: Large ribosomal subunit protein bL19m (292 aa).

The disordered stretch occupies residues 40–61 (PVRQQSTGPSEPGAFQPPPKPV). Phosphoserine is present on serine 77.

This sequence belongs to the bacterial ribosomal protein bL19 family. As to quaternary structure, component of the mitochondrial ribosome large subunit (39S) which comprises a 16S rRNA and about 50 distinct proteins.

The protein localises to the mitochondrion. The protein is Large ribosomal subunit protein bL19m (MRPL19) of Pongo abelii (Sumatran orangutan).